We begin with the raw amino-acid sequence, 156 residues long: Small ribosomal subunit protein uS7 (156 aa).

The protein belongs to the universal ribosomal protein uS7 family. Part of the 30S ribosomal subunit. Contacts proteins S9 and S11.

In terms of biological role, one of the primary rRNA binding proteins, it binds directly to 16S rRNA where it nucleates assembly of the head domain of the 30S subunit. Is located at the subunit interface close to the decoding center, probably blocks exit of the E-site tRNA. This is Small ribosomal subunit protein uS7 from Desulfitobacterium hafniense (strain Y51).